Reading from the N-terminus, the 323-residue chain is Porphobilinogen deaminase (323 aa).

S-(dipyrrolylmethanemethyl)cysteine is present on cysteine 240.

Belongs to the HMBS family. As to quaternary structure, monomer. It depends on dipyrromethane as a cofactor.

It catalyses the reaction 4 porphobilinogen + H2O = hydroxymethylbilane + 4 NH4(+). The protein operates within porphyrin-containing compound metabolism; protoporphyrin-IX biosynthesis; coproporphyrinogen-III from 5-aminolevulinate: step 2/4. Tetrapolymerization of the monopyrrole PBG into the hydroxymethylbilane pre-uroporphyrinogen in several discrete steps. The sequence is that of Porphobilinogen deaminase from Sulfurovum sp. (strain NBC37-1).